Here is a 262-residue protein sequence, read N- to C-terminus: Phosphate import ATP-binding protein PstB (262 aa).

The ABC transporter domain occupies 16-257 (MEARHLSVRY…PSEQRTEDYV (242 aa)). Position 48–55 (48–55 (GPSGCGKS)) interacts with ATP.

It belongs to the ABC transporter superfamily. Phosphate importer (TC 3.A.1.7) family. The complex is composed of two ATP-binding proteins (PstB), two transmembrane proteins (PstC and PstA) and a solute-binding protein (PstS).

It is found in the cell inner membrane. The enzyme catalyses phosphate(out) + ATP + H2O = ADP + 2 phosphate(in) + H(+). In terms of biological role, part of the ABC transporter complex PstSACB involved in phosphate import. Responsible for energy coupling to the transport system. The polypeptide is Phosphate import ATP-binding protein PstB (Anaeromyxobacter dehalogenans (strain 2CP-C)).